Reading from the N-terminus, the 746-residue chain is Catalase-peroxidase (746 aa).

Over residues 1-20 (MSSDTSSSRPPQPDSGTASK) the composition is skewed to polar residues. The segment at 1-42 (MSSDTSSSRPPQPDSGTASKSESENPAIPSPKPKAHAPLTNR) is disordered. A cross-link (tryptophyl-tyrosyl-methioninium (Trp-Tyr) (with M-262)) is located at residues 113 to 236 (WHAAGTYRIH…YGATTMGLIY (124 aa)). The Proton acceptor role is filled by His114. A cross-link (tryptophyl-tyrosyl-methioninium (Tyr-Met) (with W-113)) is located at residues 236-262 (YVNPEGPEGKPDPIAAAIDIRETFGRM). Residue His277 coordinates heme b.

This sequence belongs to the peroxidase family. Peroxidase/catalase subfamily. In terms of assembly, homodimer or homotetramer. Heme b is required as a cofactor. Formation of the three residue Trp-Tyr-Met cross-link is important for the catalase, but not the peroxidase activity of the enzyme.

The enzyme catalyses H2O2 + AH2 = A + 2 H2O. It catalyses the reaction 2 H2O2 = O2 + 2 H2O. Bifunctional enzyme with both catalase and broad-spectrum peroxidase activity. May play a role in the intracellular survival of mycobacteria. This Mycobacterium intracellulare protein is Catalase-peroxidase.